Consider the following 112-residue polypeptide: Iron-sulfur cluster assembly protein CyaY (112 aa).

This sequence belongs to the frataxin family.

Involved in iron-sulfur (Fe-S) cluster assembly. May act as a regulator of Fe-S biogenesis. The chain is Iron-sulfur cluster assembly protein CyaY from Herminiimonas arsenicoxydans.